The sequence spans 366 residues: MFNPILSVSKSIPEKYLQMSQEELENHIQAIKDQLGNRLFMPTHHYQKNEVVQFADITGDSLELARICKENTEAEYFVFNGVHFMAETADILTDDSQDIYLPDLSAGCSMADMANITQALHGYDVLTEKFHLDILPLTYVNSTAAIKKFVGEHGGSCVTSGNAKSVVDWALNQGKVILFLPDQHLGRNTAYDLGIPLEQMAVWDPIAKELIYEGDLEDLRIVLWKGHCSVHEKFHKAHIDMARERDPEINVIVHPECEFEVVQAADYAGSTRYIIETIKNAPKGSRWLIGTEMNLVNRLKETYTDITIDSLNPLMCSCLTMNRIDLPHLAWCLDKILDGNKDNIIKVDAETAKYAKESLDRMLSIT.

Iminosuccinate contacts are provided by histidine 44 and serine 61. Residue cysteine 108 participates in [4Fe-4S] cluster binding. Iminosuccinate contacts are provided by residues 139-141 (YVN) and serine 160. A [4Fe-4S] cluster-binding site is contributed by cysteine 228. Iminosuccinate is bound by residues 254-256 (HPE) and threonine 271. A [4Fe-4S] cluster-binding site is contributed by cysteine 318.

This sequence belongs to the quinolinate synthase family. Type 3 subfamily. [4Fe-4S] cluster serves as cofactor.

It is found in the cytoplasm. It catalyses the reaction iminosuccinate + dihydroxyacetone phosphate = quinolinate + phosphate + 2 H2O + H(+). The protein operates within cofactor biosynthesis; NAD(+) biosynthesis; quinolinate from iminoaspartate: step 1/1. In terms of biological role, catalyzes the condensation of iminoaspartate with dihydroxyacetone phosphate to form quinolinate. The protein is Quinolinate synthase of Staphylococcus carnosus (strain TM300).